The primary structure comprises 344 residues: Protein RecA (344 aa).

65–72 lines the ATP pocket; it reads GPESSGKT. A compositionally biased stretch (basic and acidic residues) spans 323–337; the sequence is ELREKFQPAEAPREA. The disordered stretch occupies residues 323 to 344; the sequence is ELREKFQPAEAPREAGDDEDKE.

This sequence belongs to the RecA family.

The protein resides in the cytoplasm. Its function is as follows. Can catalyze the hydrolysis of ATP in the presence of single-stranded DNA, the ATP-dependent uptake of single-stranded DNA by duplex DNA, and the ATP-dependent hybridization of homologous single-stranded DNAs. It interacts with LexA causing its activation and leading to its autocatalytic cleavage. This is Protein RecA from Xanthomonas euvesicatoria pv. vesicatoria (strain 85-10) (Xanthomonas campestris pv. vesicatoria).